The chain runs to 152 residues: Deoxyuridine 5'-triphosphate nucleotidohydrolase (152 aa).

Substrate-binding positions include 72 to 74 (RSG), N85, 89 to 91 (TID), and K99.

Belongs to the dUTPase family. Mg(2+) serves as cofactor.

It catalyses the reaction dUTP + H2O = dUMP + diphosphate + H(+). Its pathway is pyrimidine metabolism; dUMP biosynthesis; dUMP from dCTP (dUTP route): step 2/2. Its function is as follows. This enzyme is involved in nucleotide metabolism: it produces dUMP, the immediate precursor of thymidine nucleotides and it decreases the intracellular concentration of dUTP so that uracil cannot be incorporated into DNA. This chain is Deoxyuridine 5'-triphosphate nucleotidohydrolase, found in Bradyrhizobium diazoefficiens (strain JCM 10833 / BCRC 13528 / IAM 13628 / NBRC 14792 / USDA 110).